A 131-amino-acid chain; its full sequence is Glycine cleavage system H protein (131 aa).

One can recognise a Lipoyl-binding domain in the interval 24–106 (RVTVGISDHA…YGEGWIFVVE (83 aa)). N6-lipoyllysine is present on Lys-65.

This sequence belongs to the GcvH family. As to quaternary structure, the glycine cleavage system is composed of four proteins: P, T, L and H. Requires (R)-lipoate as cofactor.

The glycine cleavage system catalyzes the degradation of glycine. The H protein shuttles the methylamine group of glycine from the P protein to the T protein. The chain is Glycine cleavage system H protein from Xanthomonas euvesicatoria pv. vesicatoria (strain 85-10) (Xanthomonas campestris pv. vesicatoria).